Reading from the N-terminus, the 238-residue chain is Uridylate kinase (238 aa).

Residue 12-15 (KLSG) participates in ATP binding. Glycine 54 contributes to the UMP binding site. The ATP site is built by glycine 55 and arginine 59. UMP is bound by residues aspartate 74 and 135 to 142 (TGNPFFTT). Residues threonine 162, tyrosine 168, and aspartate 171 each contribute to the ATP site.

The protein belongs to the UMP kinase family. In terms of assembly, homohexamer.

Its subcellular location is the cytoplasm. The catalysed reaction is UMP + ATP = UDP + ADP. It participates in pyrimidine metabolism; CTP biosynthesis via de novo pathway; UDP from UMP (UMPK route): step 1/1. Inhibited by UTP. Functionally, catalyzes the reversible phosphorylation of UMP to UDP. In Bordetella avium (strain 197N), this protein is Uridylate kinase.